A 657-amino-acid polypeptide reads, in one-letter code: 9-cis-epoxycarotenoid dioxygenase NCED9, chloroplastic (657 aa).

4 residues coordinate Fe cation: histidine 357, histidine 406, histidine 471, and histidine 642.

The protein belongs to the carotenoid oxygenase family. It depends on Fe(2+) as a cofactor. Expressed in developing siliques, embryo and endosperm.

It is found in the plastid. The protein resides in the chloroplast stroma. It carries out the reaction a 9-cis-epoxycarotenoid + O2 = a 12'-apo-carotenal + 2-cis,4-trans-xanthoxin. The enzyme catalyses 9-cis-violaxanthin + O2 = (3S,5R,6S)-5,6-epoxy-3-hydroxy-5,6-dihydro-12'-apo-beta-caroten-12'-al + 2-cis,4-trans-xanthoxin. It catalyses the reaction 9'-cis-neoxanthin + O2 = (3S,5R,6R)-3,5-dihydroxy-6,7-didehydro-5,6-dihydro-12'-apo-beta-caroten-12'-al + 2-cis,4-trans-xanthoxin. In terms of biological role, has a 11,12(11',12') 9-cis epoxycarotenoid cleavage activity. Catalyzes the first step of abscisic-acid biosynthesis from carotenoids. Contributes probably to abscisic acid synthesis for the induction of seed dormancy. This Arabidopsis thaliana (Mouse-ear cress) protein is 9-cis-epoxycarotenoid dioxygenase NCED9, chloroplastic (NCED9).